The primary structure comprises 175 residues: Nucleoside-triphosphatase THEP1 (175 aa).

ATP contacts are provided by residues 15 to 22 (GNPGVGKT) and 106 to 113 (VLAIDEIG).

It belongs to the THEP1 NTPase family.

The enzyme catalyses a ribonucleoside 5'-triphosphate + H2O = a ribonucleoside 5'-diphosphate + phosphate + H(+). Has nucleotide phosphatase activity towards ATP, GTP, CTP, TTP and UTP. May hydrolyze nucleoside diphosphates with lower efficiency. The chain is Nucleoside-triphosphatase THEP1 from Saccharolobus solfataricus (strain ATCC 35092 / DSM 1617 / JCM 11322 / P2) (Sulfolobus solfataricus).